A 793-amino-acid polypeptide reads, in one-letter code: Meiosis-specific protein ASY3 (793 aa).

4 disordered regions span residues 1–40 (MSDY…DKDD), 58–97 (LQAN…RKLG), 110–287 (LSGS…KAGA), and 305–586 (EGLR…KRNS). A compositionally biased stretch (polar residues) spans 7-19 (FGSNYHPSSQSRK). The segment covering 60 to 70 (ANKKEKSDLAA) has biased composition (basic and acidic residues). A compositionally biased stretch (polar residues) spans 72-86 (QRNSAQVTGHVTSPW). Low complexity predominate over residues 110–122 (LSGSKGLNKGLNG). Residues 131-142 (SFQNCPISSPQH) are compositionally biased toward polar residues. 2 stretches are compositionally biased toward basic and acidic residues: residues 151–165 (RNDR…RMEE) and 177–187 (SQREKMDKPGK). The segment covering 209–219 (PANNEDVNSET) has biased composition (polar residues). The span at 221-248 (EVEKTNFKLSQDKGSNDDPLIKPRHNSD) shows a compositional bias: basic and acidic residues. Residues 322-341 (KKQRGRRKNTVVKCRKAHSR) show a composition bias toward basic residues. Basic and acidic residues-rich tracts occupy residues 342–354 (KKDE…KEAS), 363–385 (ESTE…DLHP), 392–407 (QKPD…HPSP), and 424–441 (NGDK…KSVE). Low complexity-rich tracts occupy residues 455-470 (APIS…EASP) and 491-502 (GTKKTSQGTTGQ). 2 stretches are compositionally biased toward basic and acidic residues: residues 505–527 (DTEK…RESS) and 541–553 (SDER…REDS). Residues 682 to 745 (SNLAKTKRKH…KGSIKKQRTS (64 aa)) adopt a coiled-coil conformation.

In terms of assembly, interacts with ASY1.

It localises to the chromosome. It is found in the nucleus. Required for normal meiosis in male and female gametophytes. Acts with ASY1 at the interface between the developing chromosome axes and the recombination machinery to ensure interhomolog recombination. Required for synaptonemal complex formation during meiosis. This Arabidopsis thaliana (Mouse-ear cress) protein is Meiosis-specific protein ASY3.